The sequence spans 501 residues: Ribose import ATP-binding protein RbsA (501 aa).

ABC transporter domains are found at residues 5–241 and 249–495; these read LELK…VGRK and LNLP…VGKQ. 37 to 44 lines the ATP pocket; the sequence is GENGAGKS.

This sequence belongs to the ABC transporter superfamily. Ribose importer (TC 3.A.1.2.1) family. In terms of assembly, the complex is composed of an ATP-binding protein (RbsA), two transmembrane proteins (RbsC) and a solute-binding protein (RbsB).

Its subcellular location is the cell inner membrane. The catalysed reaction is D-ribose(out) + ATP + H2O = D-ribose(in) + ADP + phosphate + H(+). In terms of biological role, part of the ABC transporter complex RbsABC involved in ribose import. Responsible for energy coupling to the transport system. This chain is Ribose import ATP-binding protein RbsA, found in Photorhabdus laumondii subsp. laumondii (strain DSM 15139 / CIP 105565 / TT01) (Photorhabdus luminescens subsp. laumondii).